The sequence spans 2618 residues: Mediator of RNA polymerase II transcription subunit 13 (2618 aa).

3 stretches are compositionally biased toward low complexity: residues 232 to 255 (FAAA…VPNP), 509 to 519 (TPASGTGSLSA), and 532 to 543 (DSKQLVQQQIQQ). 10 disordered regions span residues 232–279 (FAAA…AAPP), 509–543 (TPAS…QIQQ), 569–731 (GNTP…SGGP), 916–957 (LNIK…AEGL), 970–995 (TSSN…NGGC), 1036–1055 (TKMF…SSPC), 1268–1384 (PRTP…TGVV), 1521–1557 (ASAS…ITGY), 1614–1633 (SRKN…LDKI), and 1985–2060 (KTLL…GETK). Thr-571 and Thr-575 each carry phosphothreonine. Polar residues-rich tracts occupy residues 581-590 (STYSRNSLGG), 634-643 (APTSVSNLQQ), and 669-681 (SITA…QTPS). Over residues 692–706 (AGGGPAGGQGLGTGP) the composition is skewed to gly residues. Residues 711-723 (AQQPATPTAATSA) show a composition bias toward low complexity. The span at 939 to 949 (NSSGGGSGSGG) shows a compositional bias: gly residues. The segment covering 1272–1295 (LTPSTVPQPLSSGGSQYLLNQLNC) has biased composition (polar residues). 2 stretches are compositionally biased toward gly residues: residues 1375–1384 (GLGGGATGVV) and 1528–1538 (AGSGHGHGPNG). Over residues 1539 to 1553 (GSNSSSCTPPSSNPH) the composition is skewed to low complexity. Positions 1614–1629 (SRKNQNKQGPGETSSA) are enriched in polar residues. Low complexity predominate over residues 1993–2014 (GSGNSHSKGGSSCSSNSSSVSG). Phosphoserine is present on residues Ser-2472 and Ser-2475.

The protein belongs to the Mediator complex subunit 13 family. In terms of assembly, component of the Cdk8 module of the Mediator complex, composed of CycC, Cdk8, kto and skd.

The protein localises to the nucleus. Functionally, component of the Mediator complex, a coactivator involved in the regulated transcription of nearly all RNA polymerase II-dependent genes. Mediator functions as a bridge to convey information from gene-specific regulatory proteins to the basal RNA polymerase II transcription machinery. Mediator is recruited to promoters by direct interactions with regulatory proteins and serves as a scaffold for the assembly of a functional preinitiation complex with RNA polymerase II and the general transcription factors. Required for leg and eye development and macrochaete specification or differentiation. Negatively regulates sex comb development. Required for activated transcription of the MtnB and MtnD genes. This chain is Mediator of RNA polymerase II transcription subunit 13 (skd), found in Drosophila melanogaster (Fruit fly).